Here is a 1235-residue protein sequence, read N- to C-terminus: Chitin synthase 4 (1235 aa).

Over residues 1–11 the composition is skewed to pro residues; the sequence is MSLPRRPGPSP. The tract at residues 1–203 is disordered; that stretch reads MSLPRRPGPS…ASKGKREKSG (203 aa). Topologically, residues 1-212 are cytoplasmic; that stretch reads MSLPRRPGPS…GGLPTPSFWN (212 aa). A compositionally biased stretch (basic residues) spans 19-28; sequence YRQSGSRRSR. Residues 46 to 59 are compositionally biased toward polar residues; that stretch reads PSQQQRVPSISSFP. A compositionally biased stretch (basic and acidic residues) spans 94–107; it reads IRPERNRIGKDHPN. Positions 116-125 are enriched in polar residues; the sequence is NMNTLPSSTG. Residues 169–187 show a composition bias toward basic and acidic residues; it reads ETEKSGDERRRRRKSDTTK. Basic residues predominate over residues 188-199; the sequence is HGKIVKASKGKR. A helical transmembrane segment spans residues 213–233; that stretch reads IYCGFVTFWCPGFVLKCFGMP. Topologically, residues 234–244 are extracellular; sequence EMAQQRAWREK. A helical membrane pass occupies residues 245 to 265; the sequence is MGLISIILLIMGFVGFITFGF. The Cytoplasmic segment spans residues 266-514; sequence TQVVCGKPPL…ASKVVLYVSL (249 aa). A helical membrane pass occupies residues 515–535; the sequence is VLILAVVLARFVLALIFQWFI. At 536–1065 the chain is on the extracellular side; the sequence is SKTYAAAKTS…SMQFIVGIEL (530 aa). Positions 545–592 are disordered; sequence SQTSDQRKRNRQIEDWTEDIYRAPPRLPGEVGSSVAGSSDRQSKRSSA. Residues 549–558 show a composition bias toward basic and acidic residues; the sequence is DQRKRNRQIE. The N-linked (GlcNAc...) asparagine glycan is linked to N639. The interval 645 to 670 is disordered; the sequence is FLKSDAYGSSSSPADGPGPAGFIHEA. Residues 648–665 show a composition bias toward low complexity; it reads SDAYGSSSSPADGPGPAG. A glycan (N-linked (GlcNAc...) asparagine) is linked at N1034. Residues 1066–1086 form a helical membrane-spanning segment; that stretch reads IGTLVLPAAIAFTFYVVIISI. Residues 1087-1092 lie on the Cytoplasmic side of the membrane; the sequence is INSPPQ. Residues 1093-1113 traverse the membrane as a helical segment; it reads IIPLVLLGLILGLPAILVVVT. At 1114 to 1116 the chain is on the extracellular side; the sequence is AHS. The helical transmembrane segment at 1117-1137 threads the bilayer; sequence WSYIIWMFIYLLSLPVWNFVL. At 1138–1235 the chain is on the cytoplasmic side; that stretch reads PTYAFWKFDD…RHFDDYFSDA (98 aa). The tract at residues 1201 to 1235 is disordered; it reads RDNVISGVGGSNGWGSSQPRGHEQGRHFDDYFSDA. Residues 1220-1235 show a composition bias toward basic and acidic residues; it reads RGHEQGRHFDDYFSDA.

The protein belongs to the chitin synthase family. Class IV subfamily.

Its subcellular location is the cell membrane. The enzyme catalyses [(1-&gt;4)-N-acetyl-beta-D-glucosaminyl](n) + UDP-N-acetyl-alpha-D-glucosamine = [(1-&gt;4)-N-acetyl-beta-D-glucosaminyl](n+1) + UDP + H(+). In terms of biological role, polymerizes chitin, a structural polymer of the cell wall and septum, by transferring the sugar moiety of UDP-GlcNAc to the non-reducing end of the growing chitin polymer. In Neurospora crassa (strain ATCC 24698 / 74-OR23-1A / CBS 708.71 / DSM 1257 / FGSC 987), this protein is Chitin synthase 4 (chs-4).